The sequence spans 332 residues: GTP 3',8-cyclase (332 aa).

In terms of domain architecture, Radical SAM core spans 9 to 220 (RFARKVDYLR…DQVRERIAER (212 aa)). Position 18 (Arg-18) interacts with GTP. [4Fe-4S] cluster contacts are provided by Cys-25 and Cys-29. An S-adenosyl-L-methionine-binding site is contributed by Tyr-31. Cys-32 contacts [4Fe-4S] cluster. Residue Arg-67 coordinates GTP. Residue Gly-71 participates in S-adenosyl-L-methionine binding. Thr-98 contacts GTP. Residue Ser-122 participates in S-adenosyl-L-methionine binding. Position 159 (Lys-159) interacts with GTP. Residue Met-193 coordinates S-adenosyl-L-methionine. Residues Cys-258 and Cys-261 each coordinate [4Fe-4S] cluster. GTP is bound at residue 263–265 (RVR). Position 275 (Cys-275) interacts with [4Fe-4S] cluster.

Belongs to the radical SAM superfamily. MoaA family. Monomer and homodimer. [4Fe-4S] cluster serves as cofactor.

It catalyses the reaction GTP + AH2 + S-adenosyl-L-methionine = (8S)-3',8-cyclo-7,8-dihydroguanosine 5'-triphosphate + 5'-deoxyadenosine + L-methionine + A + H(+). Its pathway is cofactor biosynthesis; molybdopterin biosynthesis. Catalyzes the cyclization of GTP to (8S)-3',8-cyclo-7,8-dihydroguanosine 5'-triphosphate. This is GTP 3',8-cyclase from Pseudomonas savastanoi pv. phaseolicola (strain 1448A / Race 6) (Pseudomonas syringae pv. phaseolicola (strain 1448A / Race 6)).